The primary structure comprises 76 residues: DNA-directed RNA polymerase subunit epsilon (76 aa).

Belongs to the RNA polymerase subunit epsilon family. As to quaternary structure, RNAP is composed of a core of 2 alpha, a beta and a beta' subunit. The core is associated with a delta subunit, and at least one of epsilon or omega. When a sigma factor is associated with the core the holoenzyme is formed, which can initiate transcription.

It carries out the reaction RNA(n) + a ribonucleoside 5'-triphosphate = RNA(n+1) + diphosphate. A non-essential component of RNA polymerase (RNAP). This Streptococcus pyogenes serotype M1 protein is DNA-directed RNA polymerase subunit epsilon.